Here is a 137-residue protein sequence, read N- to C-terminus: Molluscan insulin-related peptide 2 (137 aa).

The first 31 residues, 1–31, serve as a signal peptide directing secretion; the sequence is MVGVRLVFTNAFVVTVLLTLLLDVVVKPAEG. Q32 is subject to Pyrrolidone carboxylic acid. Cystine bridges form between C47–C123, C59–C136, and C122–C127. A propeptide spans 71 to 83 (C-beta peptide like); that stretch reads DAETGWLLPETMV. Residues 86–110 constitute a propeptide, C-alpha peptide like; that stretch reads NAETDLDDPLRNIKLSSESALTYLT. Q113 bears the Pyrrolidone carboxylic acid mark.

Belongs to the insulin family. As to quaternary structure, heterodimer of a B chain and an A chain linked by two disulfide bonds. Expressed in the cerebral light-green cells which are giant neuroendocrines cells involved in the control of growth.

Its subcellular location is the cytoplasmic vesicle. The protein resides in the secretory vesicle. This chain is Molluscan insulin-related peptide 2, found in Lymnaea stagnalis (Great pond snail).